Consider the following 462-residue polypeptide: Glutamate--tRNA ligase 2 (462 aa).

The short motif at 8 to 18 is the 'HIGH' region element; that stretch reads PSPTGLLHVGG. The short motif at 227–231 is the 'KMSKS' region element; sequence PLSKR. Residue K230 coordinates ATP.

It belongs to the class-I aminoacyl-tRNA synthetase family. Glutamate--tRNA ligase type 1 subfamily. Monomer.

The protein resides in the cytoplasm. The catalysed reaction is tRNA(Glu) + L-glutamate + ATP = L-glutamyl-tRNA(Glu) + AMP + diphosphate. Functionally, catalyzes the attachment of glutamate to tRNA(Glu) in a two-step reaction: glutamate is first activated by ATP to form Glu-AMP and then transferred to the acceptor end of tRNA(Glu). In Thermosipho melanesiensis (strain DSM 12029 / CIP 104789 / BI429), this protein is Glutamate--tRNA ligase 2.